The sequence spans 485 residues: UDP-N-acetylmuramate--L-alanine ligase (485 aa).

ATP is bound at residue 120–126 (GSHGKTT).

This sequence belongs to the MurCDEF family.

The protein localises to the cytoplasm. It carries out the reaction UDP-N-acetyl-alpha-D-muramate + L-alanine + ATP = UDP-N-acetyl-alpha-D-muramoyl-L-alanine + ADP + phosphate + H(+). It functions in the pathway cell wall biogenesis; peptidoglycan biosynthesis. Its function is as follows. Cell wall formation. This is UDP-N-acetylmuramate--L-alanine ligase from Rickettsia rickettsii (strain Iowa).